Consider the following 413-residue polypeptide: Floricaula/leafy homolog 1 (413 aa).

Disordered regions lie at residues 154 to 177 and 191 to 239; these read EGLS…GGTT and QRRR…RQRE. Positions 201-210 are enriched in basic and acidic residues; sequence GRERRGRASA. Acidic residues predominate over residues 211–225; it reads EEDEETEEGQEDEWN. DNA-binding regions lie at residues 238-242, 307-314, and 378-381; these read REHPF, NKPKMRHY, and YVPT.

Belongs to the FLO/LFY family. As to expression, expressed in floral meristems and in indeterminate vegetative meristems.

It localises to the nucleus. Functionally, probable transcription factor that act to specify determinacy in the progenitor cells for both flowers and leaves. This Nicotiana tabacum (Common tobacco) protein is Floricaula/leafy homolog 1 (FL1).